The primary structure comprises 629 residues: tRNA uridine 5-carboxymethylaminomethyl modification enzyme MnmG (629 aa).

Residues 13–18 (GGGHAG), V125, and S180 contribute to the FAD site. NAD(+) is bound at residue 273-287 (GPRYCPSIEDKVMRF). FAD is bound at residue Q370.

It belongs to the MnmG family. Homodimer. Heterotetramer of two MnmE and two MnmG subunits. FAD is required as a cofactor.

It localises to the cytoplasm. Its function is as follows. NAD-binding protein involved in the addition of a carboxymethylaminomethyl (cmnm) group at the wobble position (U34) of certain tRNAs, forming tRNA-cmnm(5)s(2)U34. The protein is tRNA uridine 5-carboxymethylaminomethyl modification enzyme MnmG of Shigella flexneri serotype 5b (strain 8401).